Reading from the N-terminus, the 523-residue chain is tRNA-2-methylthio-N(6)-dimethylallyladenosine synthase (523 aa).

The tract at residues 1–26 is disordered; that stretch reads MNEKQRLEQTGQIQTASHPADRKSDL. Over residues 8 to 17 the composition is skewed to polar residues; that stretch reads EQTGQIQTAS. One can recognise an MTTase N-terminal domain in the interval 80–198; it reads RKFYIRTYGC…LPYILHEAYM (119 aa). The [4Fe-4S] cluster site is built by C89, C125, C159, C235, C239, and C242. Residues 221-451 form the Radical SAM core domain; it reads RKGNIKAWVN…NALVQEIAAK (231 aa). In terms of domain architecture, TRAM spans 454–517; that stretch reads KQYEGQVVEV…TWTLTGELAN (64 aa).

It belongs to the methylthiotransferase family. MiaB subfamily. As to quaternary structure, monomer. The cofactor is [4Fe-4S] cluster.

The protein resides in the cytoplasm. It carries out the reaction N(6)-dimethylallyladenosine(37) in tRNA + (sulfur carrier)-SH + AH2 + 2 S-adenosyl-L-methionine = 2-methylsulfanyl-N(6)-dimethylallyladenosine(37) in tRNA + (sulfur carrier)-H + 5'-deoxyadenosine + L-methionine + A + S-adenosyl-L-homocysteine + 2 H(+). Its function is as follows. Catalyzes the methylthiolation of N6-(dimethylallyl)adenosine (i(6)A), leading to the formation of 2-methylthio-N6-(dimethylallyl)adenosine (ms(2)i(6)A) at position 37 in tRNAs that read codons beginning with uridine. The protein is tRNA-2-methylthio-N(6)-dimethylallyladenosine synthase of Geobacillus thermodenitrificans (strain NG80-2).